The sequence spans 261 residues: Ribosomal RNA small subunit methyltransferase J (261 aa).

S-adenosyl-L-methionine contacts are provided by residues 111 to 112, 127 to 128, 163 to 164, and Asp-181; these read RD, ER, and SS.

It belongs to the methyltransferase superfamily. RsmJ family.

The protein localises to the cytoplasm. It catalyses the reaction guanosine(1516) in 16S rRNA + S-adenosyl-L-methionine = N(2)-methylguanosine(1516) in 16S rRNA + S-adenosyl-L-homocysteine + H(+). In terms of biological role, specifically methylates the guanosine in position 1516 of 16S rRNA. The protein is Ribosomal RNA small subunit methyltransferase J of Shewanella sp. (strain MR-4).